Consider the following 338-residue polypeptide: MWREEAREQLRRGRCCFAAASVVSTAKHNKSLGNCTHGSGVMTEAEGILNNVWDAVDSKQQGFIYAKDMPDLVGRFGQFLAQSLTSRANDEAIAAFASEKPFYKLDKEQFKSTFQTLVGTSLQTAVELAGHGEPRPRLFGAIRRASATGDEQAREELERKSAELSRVRDELDEWKSKYQFLEREFLFYQTHHENSVDSTQHEFIISEMKRTIEEQTRMIGQLRRQVQGGTQVLARAGKRASPVDVFMYVSRQGLLLLMRMPKAAFLLLLLGYFVWYTVMGGAVQGPDPSVALPEPPKQPWWEQNNIISALYWYLTDTFEPSQRINDTVNDNYNSLFGL.

Positions Gly-149–Gly-228 form a coiled coil. The chain crosses the membrane as a helical span at residues Ala-263–Val-283.

The protein belongs to the MPS2 family.

The protein resides in the nucleus membrane. It is found in the cytoplasm. Its subcellular location is the cytoskeleton. The protein localises to the microtubule organizing center. It localises to the spindle pole body. Functionally, component of the spindle pole body (SPB) required for insertion of the nascent SPB into the nuclear envelope and for the proper execution of spindle pole body (SPB) duplication. The chain is Monopolar spindle protein 2 (MPS2) from Eremothecium gossypii (strain ATCC 10895 / CBS 109.51 / FGSC 9923 / NRRL Y-1056) (Yeast).